Consider the following 196-residue polypeptide: ATP-dependent Clp protease proteolytic subunit (196 aa).

The Nucleophile role is filled by S101. H126 is an active-site residue.

It belongs to the peptidase S14 family. Component of the chloroplastic Clp protease core complex.

It localises to the plastid. Its subcellular location is the chloroplast stroma. The enzyme catalyses Hydrolysis of proteins to small peptides in the presence of ATP and magnesium. alpha-casein is the usual test substrate. In the absence of ATP, only oligopeptides shorter than five residues are hydrolyzed (such as succinyl-Leu-Tyr-|-NHMec, and Leu-Tyr-Leu-|-Tyr-Trp, in which cleavage of the -Tyr-|-Leu- and -Tyr-|-Trp bonds also occurs).. Its function is as follows. Cleaves peptides in various proteins in a process that requires ATP hydrolysis. Has a chymotrypsin-like activity. Plays a major role in the degradation of misfolded proteins. This chain is ATP-dependent Clp protease proteolytic subunit, found in Populus trichocarpa (Western balsam poplar).